The following is a 218-amino-acid chain: Sec-independent protein translocase protein TatB (218 aa).

The chain crosses the membrane as a helical span at residues 1–21 (MFDIGFSELLLVLVIGLVVLG). Disordered regions lie at residues 126-145 (AESA…DVDK) and 174-218 (SSVD…GGDR). A compositionally biased stretch (basic and acidic residues) spans 199 to 218 (HSTDSHGADQPRTHQPGGDR).

The protein belongs to the TatB family. In terms of assembly, the Tat system comprises two distinct complexes: a TatABC complex, containing multiple copies of TatA, TatB and TatC subunits, and a separate TatA complex, containing only TatA subunits. Substrates initially bind to the TatABC complex, which probably triggers association of the separate TatA complex to form the active translocon.

The protein resides in the cell inner membrane. Functionally, part of the twin-arginine translocation (Tat) system that transports large folded proteins containing a characteristic twin-arginine motif in their signal peptide across membranes. Together with TatC, TatB is part of a receptor directly interacting with Tat signal peptides. TatB may form an oligomeric binding site that transiently accommodates folded Tat precursor proteins before their translocation. This chain is Sec-independent protein translocase protein TatB, found in Yersinia enterocolitica serotype O:8 / biotype 1B (strain NCTC 13174 / 8081).